Consider the following 520-residue polypeptide: MGKKGKKEKKGRGAEKTAAKMEKKVSKRSRKEEEDLEALIAHFQTLDAKRTQTVELPCPPPSPRLNASLSVHPEKDELILFGGEYFNGQKTFLYNELYVYNTRKDTWTKVDIPSPPPRRCAHQAVVVPQGGGQLWVFGGEFASPNGEQFYHYKDLWVLHLATKTWEQVKSTGGPSGRSGHRMVAWKRQLILFGGFHESTRDYIYYNDVYAFNLDTFTWSKLSPSGTGPTPRSGCQMSVTPQGGIVVYGGYSKQRVKKDVDKGTRHSDMFLLKPEDGREDKWVWTRMNPSGVKPTPRSGFSVAMAPNHQTLFFGGVCDEEEEESLSGEFFNDLYFYDATRNRWFEGQLKGPKSEKKKRRRGRKEEPEGGSRPACGGAGTQGPVQLVKEVVAEDGTVVTIKQVLTAPGSAGQPRSEDEDSLEEAGSPAPGPCPRSNAMLAVKHGVLYVYGGMFEAGDRQVTLSDLHCLDLHRMEAWKALVEMDPETQEWLEETDSEEDSEEVEGAEGGVDDEDSGEESGAED.

The span at 1–10 (MGKKGKKEKK) shows a compositional bias: basic residues. The segment at 1-33 (MGKKGKKEKKGRGAEKTAAKMEKKVSKRSRKEE) is disordered. A compositionally biased stretch (basic and acidic residues) spans 11-24 (GRGAEKTAAKMEKK). Kelch repeat units follow at residues 77–129 (ELIL…VVPQ), 133–187 (QLWV…AWKR), 188–241 (QLIL…VTPQ), 243–289 (GIVV…MNPS), and 308–361 (QTLF…RRGR). Disordered regions lie at residues 346 to 379 (QLKG…AGTQ), 402 to 431 (LTAP…GPCP), and 481 to 520 (DPET…GAED). Phosphoserine is present on residues S413 and S418. The stretch at 443–494 (VLYVYGGMFEAGDRQVTLSDLHCLDLHRMEAWKALVEMDPETQEWLEETDSE) is one Kelch 6 repeat.

The polypeptide is Kelch domain-containing protein 4 (KLHDC4) (Homo sapiens (Human)).